The chain runs to 198 residues: Auxin-binding protein 1 (198 aa).

The signal sequence occupies residues 1–33 (MIVLSVGSASSSPIVVVFSVALLLFYFSETSLG). Cys-36 and Cys-189 are oxidised to a cystine. His-92, His-94, and Glu-98 together coordinate Zn(2+). N-linked (GlcNAc...) asparagine glycosylation is present at Asn-130. His-141 lines the Zn(2+) pocket. Residues 195 to 198 (KDEL) carry the Prevents secretion from ER motif.

Homodimer. May interact with the GPI-anchored plasma membrane protein SKU5 and its family members. Interacts with TMK1 (via extracellular domain). Glycosylated. In terms of processing, ubiquitinated by RMA2, leading to proteasomal degradation.

It is found in the endoplasmic reticulum lumen. It localises to the cell membrane. Functionally, auxin receptor that controls cell elongation and cell division. Involved in embryonic morphogenesis. Acts on the cell cycle, endocycle, cell plate formation, and cell expansion and contributes to the control of auxin-related gene expression. Controls root meristem size and mediates auxin responsiveness. Involved in activation of ROP GTPases in response to auxin and regulation of clathrin-mediated endocytosis in roots. Acts as a positive factor in clathrin recruitment to the plasma membrane, thereby promoting endocytosis. Upon auxin binding, restricts the internalization of PIN proteins by inhibiting clathrin-mediated endocytosis. Promotes auxin-triggered phosphorylation status modulation of RAF-like kinases (e.g. RAF20 and RAF24). Involved in the regulation of polar auxin transport. Behaves as a negative regulator of the SCF(TIR1/AFB) signaling pathway, protecting AUX/IAA repressors from degradation. Regulates the expression of cell wall remodeling genes via an SCF(TIR1/AFB)-dependent pathway. Involved in the modulation of hemicellulose xyloglucan structure. Required for rapid auxin-mediated re-orientation of microtubules to regulate cell elongation in roots and dark-grown hypocotyls as well as asymmetric growth during gravitropic responses. Involved in the shade avoidance response. Forms with TMK1 a cell surface auxin perception complex that activates ROP signaling pathways. ABP1 sensing of auxin is important for the ABP1-TMK1 complex formation. Interacts functionally with phytochrome to regulate growth. This chain is Auxin-binding protein 1, found in Arabidopsis thaliana (Mouse-ear cress).